Consider the following 221-residue polypeptide: Thiamine-phosphate synthase (221 aa).

4-amino-2-methyl-5-(diphosphooxymethyl)pyrimidine contacts are provided by residues 44-48 (QLRLK) and Asn80. Mg(2+)-binding residues include Asp81 and Asp100. Thr119 lines the 4-amino-2-methyl-5-(diphosphooxymethyl)pyrimidine pocket. Residue 146–148 (TTT) participates in 2-[(2R,5Z)-2-carboxy-4-methylthiazol-5(2H)-ylidene]ethyl phosphate binding. Lys149 provides a ligand contact to 4-amino-2-methyl-5-(diphosphooxymethyl)pyrimidine. Gly176 provides a ligand contact to 2-[(2R,5Z)-2-carboxy-4-methylthiazol-5(2H)-ylidene]ethyl phosphate.

The protein belongs to the thiamine-phosphate synthase family. It depends on Mg(2+) as a cofactor.

The enzyme catalyses 2-[(2R,5Z)-2-carboxy-4-methylthiazol-5(2H)-ylidene]ethyl phosphate + 4-amino-2-methyl-5-(diphosphooxymethyl)pyrimidine + 2 H(+) = thiamine phosphate + CO2 + diphosphate. It carries out the reaction 2-(2-carboxy-4-methylthiazol-5-yl)ethyl phosphate + 4-amino-2-methyl-5-(diphosphooxymethyl)pyrimidine + 2 H(+) = thiamine phosphate + CO2 + diphosphate. It catalyses the reaction 4-methyl-5-(2-phosphooxyethyl)-thiazole + 4-amino-2-methyl-5-(diphosphooxymethyl)pyrimidine + H(+) = thiamine phosphate + diphosphate. Its pathway is cofactor biosynthesis; thiamine diphosphate biosynthesis; thiamine phosphate from 4-amino-2-methyl-5-diphosphomethylpyrimidine and 4-methyl-5-(2-phosphoethyl)-thiazole: step 1/1. Its function is as follows. Condenses 4-methyl-5-(beta-hydroxyethyl)thiazole monophosphate (THZ-P) and 2-methyl-4-amino-5-hydroxymethyl pyrimidine pyrophosphate (HMP-PP) to form thiamine monophosphate (TMP). The protein is Thiamine-phosphate synthase of Hyphomonas neptunium (strain ATCC 15444).